A 160-amino-acid polypeptide reads, in one-letter code: Cytochrome b6-f complex subunit 4 (160 aa).

3 helical membrane-spanning segments follow: residues 36–56 (LLYI…GLAV), 95–115 (LLGV…PFLE), and 131–151 (TVFL…TLPI).

Belongs to the cytochrome b family. PetD subfamily. As to quaternary structure, the 4 large subunits of the cytochrome b6-f complex are cytochrome b6, subunit IV (17 kDa polypeptide, petD), cytochrome f and the Rieske protein, while the 4 small subunits are petG, petL, petM and petN. The complex functions as a dimer.

It is found in the plastid. It localises to the chloroplast thylakoid membrane. In terms of biological role, component of the cytochrome b6-f complex, which mediates electron transfer between photosystem II (PSII) and photosystem I (PSI), cyclic electron flow around PSI, and state transitions. The protein is Cytochrome b6-f complex subunit 4 of Morus indica (Mulberry).